A 957-amino-acid polypeptide reads, in one-letter code: Valine--tRNA ligase (957 aa).

Positions Pro42–His52 match the 'HIGH' region motif. Positions Lys554–Ser558 match the 'KMSKS' region motif. Lys557 lines the ATP pocket. The stretch at Asp890–Ala956 forms a coiled coil.

The protein belongs to the class-I aminoacyl-tRNA synthetase family. ValS type 1 subfamily. In terms of assembly, monomer.

It is found in the cytoplasm. It catalyses the reaction tRNA(Val) + L-valine + ATP = L-valyl-tRNA(Val) + AMP + diphosphate. Functionally, catalyzes the attachment of valine to tRNA(Val). As ValRS can inadvertently accommodate and process structurally similar amino acids such as threonine, to avoid such errors, it has a 'posttransfer' editing activity that hydrolyzes mischarged Thr-tRNA(Val) in a tRNA-dependent manner. This chain is Valine--tRNA ligase, found in Aliivibrio fischeri (strain ATCC 700601 / ES114) (Vibrio fischeri).